Here is a 62-residue protein sequence, read N- to C-terminus: Photosystem II reaction center protein Z (62 aa).

Helical transmembrane passes span 8–28 and 41–61; these read AVFA…VVFA and FSGT…NSLI.

The protein belongs to the PsbZ family. In terms of assembly, PSII is composed of 1 copy each of membrane proteins PsbA, PsbB, PsbC, PsbD, PsbE, PsbF, PsbH, PsbI, PsbJ, PsbK, PsbL, PsbM, PsbT, PsbY, PsbZ, Psb30/Ycf12, at least 3 peripheral proteins of the oxygen-evolving complex and a large number of cofactors. It forms dimeric complexes.

It localises to the plastid. The protein localises to the chloroplast thylakoid membrane. In terms of biological role, may control the interaction of photosystem II (PSII) cores with the light-harvesting antenna, regulates electron flow through the 2 photosystem reaction centers. PSII is a light-driven water plastoquinone oxidoreductase, using light energy to abstract electrons from H(2)O, generating a proton gradient subsequently used for ATP formation. The protein is Photosystem II reaction center protein Z of Morus indica (Mulberry).